The following is a 226-amino-acid chain: Aspartyl protease inhibitor (226 aa).

A signal peptide spans 1–15 (MKLLFLCALIALTAA). Disordered stretches follow at residues 95–116 (GKKGKAVETSSEELPKAPKKPS) and 196–218 (EAKQTTTTEAPELPEEAPEQPNV). A disulfide bridge links Cys-131 with Cys-222.

It belongs to the protease inhibitor I33 family.

It localises to the secreted. Functionally, aspartyl protease inhibitor. In Parelaphostrongylus tenuis (Meningeal worm), this protein is Aspartyl protease inhibitor.